The following is a 732-amino-acid chain: Protein DIA2 (732 aa).

TPR repeat units follow at residues valine 15–tyrosine 48, isoleucine 78–asparagine 111, and lysine 113–aspartate 145. The 48-residue stretch at threonine 204–phenylalanine 251 folds into the F-box domain. A Phosphoserine modification is found at serine 393. LRR repeat units lie at residues leucine 425–glycine 449, phenylalanine 480–phenylalanine 505, tryptophan 509–glutamine 532, leucine 550–glutamine 574, glycine 579–threonine 602, leucine 616–serine 637, and leucine 645–lysine 669.

The protein belongs to the DIA2 family. Component of the SCF(DIA2) complex containing CDC53, SKP1, RBX1 and DIA2. Interacts with SKP1.

It localises to the nucleus. Functionally, F-box protein component of a SCF (SKP1-CUL1-F-box protein) E3 ubiquitin-protein ligase complex which mediates the ubiquitination and subsequent proteasomal degradation of target proteins. Probably recognizes and binds to phosphorylated target proteins. The SCF(DIA2) complex is specifically involved in the pheromone induced degradation of phosphorylated TEC1. The SCF(DIA2) complex binds to DNA replication origins. Involved in DNA replication, genome stability, and the control of cell cycle, probably through its association to replication origins to facilitate the ubiquitination of another origin-binding protein. Required for invasive growth and growth under alkaline conditions. The protein is Protein DIA2 (DIA2) of Saccharomyces cerevisiae (strain ATCC 204508 / S288c) (Baker's yeast).